The following is a 465-amino-acid chain: Glutamate--tRNA ligase 1 (465 aa).

Positions 8–18 (PSPTGLMHLGN) match the 'HIGH' region motif. Positions 249–253 (PLSKR) match the 'KMSKS' region motif. Lys252 is a binding site for ATP.

This sequence belongs to the class-I aminoacyl-tRNA synthetase family. Glutamate--tRNA ligase type 1 subfamily. Monomer.

Its subcellular location is the cytoplasm. It catalyses the reaction tRNA(Glu) + L-glutamate + ATP = L-glutamyl-tRNA(Glu) + AMP + diphosphate. Catalyzes the attachment of glutamate to tRNA(Glu) in a two-step reaction: glutamate is first activated by ATP to form Glu-AMP and then transferred to the acceptor end of tRNA(Glu). The protein is Glutamate--tRNA ligase 1 of Coxiella burnetii (strain CbuG_Q212) (Coxiella burnetii (strain Q212)).